Reading from the N-terminus, the 320-residue chain is Acetyl-coenzyme A carboxylase carboxyl transferase subunit alpha (320 aa).

One can recognise a CoA carboxyltransferase C-terminal domain in the interval 39-293 (ALDAKAAKLL…RGAIAAMLKE (255 aa)).

It belongs to the AccA family. As to quaternary structure, acetyl-CoA carboxylase is a heterohexamer composed of biotin carboxyl carrier protein (AccB), biotin carboxylase (AccC) and two subunits each of ACCase subunit alpha (AccA) and ACCase subunit beta (AccD).

It is found in the cytoplasm. It carries out the reaction N(6)-carboxybiotinyl-L-lysyl-[protein] + acetyl-CoA = N(6)-biotinyl-L-lysyl-[protein] + malonyl-CoA. It functions in the pathway lipid metabolism; malonyl-CoA biosynthesis; malonyl-CoA from acetyl-CoA: step 1/1. Its function is as follows. Component of the acetyl coenzyme A carboxylase (ACC) complex. First, biotin carboxylase catalyzes the carboxylation of biotin on its carrier protein (BCCP) and then the CO(2) group is transferred by the carboxyltransferase to acetyl-CoA to form malonyl-CoA. The protein is Acetyl-coenzyme A carboxylase carboxyl transferase subunit alpha of Ruegeria pomeroyi (strain ATCC 700808 / DSM 15171 / DSS-3) (Silicibacter pomeroyi).